The chain runs to 337 residues: tRNA N6-adenosine threonylcarbamoyltransferase (337 aa).

Fe cation contacts are provided by histidine 111 and histidine 115. Substrate is bound by residues 134 to 138, aspartate 167, glycine 180, and asparagine 272; that span reads LVSGG. Aspartate 300 is a Fe cation binding site.

Belongs to the KAE1 / TsaD family. Requires Fe(2+) as cofactor.

It is found in the cytoplasm. The catalysed reaction is L-threonylcarbamoyladenylate + adenosine(37) in tRNA = N(6)-L-threonylcarbamoyladenosine(37) in tRNA + AMP + H(+). Required for the formation of a threonylcarbamoyl group on adenosine at position 37 (t(6)A37) in tRNAs that read codons beginning with adenine. Is involved in the transfer of the threonylcarbamoyl moiety of threonylcarbamoyl-AMP (TC-AMP) to the N6 group of A37, together with TsaE and TsaB. TsaD likely plays a direct catalytic role in this reaction. This is tRNA N6-adenosine threonylcarbamoyltransferase from Erwinia tasmaniensis (strain DSM 17950 / CFBP 7177 / CIP 109463 / NCPPB 4357 / Et1/99).